A 277-amino-acid chain; its full sequence is Proteasome subunit beta type-7 (277 aa).

Residues 1–43 (MAAVSVFQPPVGGFSFDNCRRNAVLEADFAKKGFKLPKARKTG) constitute a propeptide, removed in mature form. Catalysis depends on T44, which acts as the Nucleophile.

Belongs to the peptidase T1B family. As to quaternary structure, the 26S proteasome consists of a 20S proteasome core and two 19S regulatory subunits. The 20S proteasome core is a barrel-shaped complex made of 28 subunits that are arranged in four stacked rings. The two outer rings are each formed by seven alpha subunits, and the two inner rings are formed by seven beta subunits. The proteolytic activity is exerted by three beta-subunits PSMB5, PSMB6 and PSMB7.

The protein resides in the cytoplasm. It is found in the nucleus. It catalyses the reaction Cleavage of peptide bonds with very broad specificity.. Its function is as follows. Component of the 20S core proteasome complex involved in the proteolytic degradation of most intracellular proteins. This complex plays numerous essential roles within the cell by associating with different regulatory particles. Associated with two 19S regulatory particles, forms the 26S proteasome and thus participates in the ATP-dependent degradation of ubiquitinated proteins. The 26S proteasome plays a key role in the maintenance of protein homeostasis by removing misfolded or damaged proteins that could impair cellular functions, and by removing proteins whose functions are no longer required. Associated with the PA200 or PA28, the 20S proteasome mediates ubiquitin-independent protein degradation. This type of proteolysis is required in several pathways including spermatogenesis (20S-PA200 complex) or generation of a subset of MHC class I-presented antigenic peptides (20S-PA28 complex). Within the 20S core complex, PSMB7 displays a trypsin-like activity. This Mus musculus (Mouse) protein is Proteasome subunit beta type-7 (Psmb7).